We begin with the raw amino-acid sequence, 732 residues long: Catalase-peroxidase (732 aa).

A disordered region spans residues 1 to 29; sequence MTTESKCPFSGGGKPNTPRRGPSNQDWWP. The tryptophyl-tyrosyl-methioninium (Trp-Tyr) (with M-249) cross-link spans 96–223; the sequence is WHSAGTYRIG…LAAVQMGLIY (128 aa). His97 acts as the Proton acceptor in catalysis. A cross-link (tryptophyl-tyrosyl-methioninium (Tyr-Met) (with W-96)) is located at residues 223–249; that stretch reads YVNPEGPDGNPDPVAAARDIRETFARM. His264 lines the heme b pocket.

The protein belongs to the peroxidase family. Peroxidase/catalase subfamily. Homodimer or homotetramer. Heme b serves as cofactor. Post-translationally, formation of the three residue Trp-Tyr-Met cross-link is important for the catalase, but not the peroxidase activity of the enzyme.

The catalysed reaction is H2O2 + AH2 = A + 2 H2O. It carries out the reaction 2 H2O2 = O2 + 2 H2O. In terms of biological role, bifunctional enzyme with both catalase and broad-spectrum peroxidase activity. This is Catalase-peroxidase from Serratia proteamaculans (strain 568).